The primary structure comprises 336 residues: Mitochondrial fission regulator 2 (336 aa).

A coiled-coil region spans residues 139–166 (QPDALLKISALEEELQRLRAQIATIITA). The segment at 296 to 336 (HRQRDDSFGKENHSAEPSPFSSPDTPRIFQHTRRSQGRIHL) is disordered. A compositionally biased stretch (basic and acidic residues) spans 297-309 (RQRDDSFGKENHS). Residues 325–336 (QHTRRSQGRIHL) show a composition bias toward basic residues.

It belongs to the MTFR1 family.

Its subcellular location is the mitochondrion. Its function is as follows. May play a role in mitochondrial aerobic respiration. Can also promote mitochondrial fission. The chain is Mitochondrial fission regulator 2 (mtfr2) from Danio rerio (Zebrafish).